The following is a 124-amino-acid chain: Large ribosomal subunit protein bL17 (124 aa).

It belongs to the bacterial ribosomal protein bL17 family. As to quaternary structure, part of the 50S ribosomal subunit. Contacts protein L32.

The polypeptide is Large ribosomal subunit protein bL17 (Mycoplasma pneumoniae (strain ATCC 29342 / M129 / Subtype 1) (Mycoplasmoides pneumoniae)).